Consider the following 627-residue polypeptide: Glyco-Gag protein (627 aa).

Residues 1–63 (LGDVPRTSGA…FLLSVWNRSR (63 aa)) lie on the Cytoplasmic side of the membrane. Residues 64–86 (AARLVCCSIVLCCLCLTVFLYLS) traverse the membrane as a helical segment. The Extracellular segment spans residues 87-627 (ENMGQTVTTP…PQASLLTLDD (541 aa)). Asparagine 113 is a glycosylation site (N-linked (GlcNAc...) asparagine; by host). A compositionally biased stretch (pro residues) spans 199–215 (PPSAPSLPPEPPFPTPP). Disordered stretches follow at residues 199–310 (PPSA…RQGG) and 523–627 (RETP…TLDD). Composition is skewed to basic and acidic residues over residues 523–555 (RETP…EKER) and 575–608 (RQDR…DCPK). Residues 593–608 (CAYCKEKGHWARDCPK) form a CCHC-type zinc finger.

Post-translationally, glycosylated by host. In terms of processing, cleaved by host near the middle of the molecule, releasing the c-terminal half containing capsid and nucleoprotein domains op GAG.

It is found in the host cell membrane. Plays a role in viral particle release. Presumably acts by facilitating the fission of the virion bud at the cell surface. May prevent the antiviral activity of murine APOBEC3. This Friend murine leukemia virus (isolate 57) (FrMLV) protein is Glyco-Gag protein.